Reading from the N-terminus, the 217-residue chain is Protein GrpE (217 aa).

Over residues 1 to 10 the composition is skewed to basic and acidic residues; that stretch reads MSDHAEHAAD. A disordered region spans residues 1 to 39; it reads MSDHAEHAADAADTDAPEGDDAGGDDGEQAGDDGTSALS. Over residues 12-31 the composition is skewed to acidic residues; it reads ADTDAPEGDDAGGDDGEQAG.

The protein belongs to the GrpE family. As to quaternary structure, homodimer.

The protein localises to the cytoplasm. In terms of biological role, participates actively in the response to hyperosmotic and heat shock by preventing the aggregation of stress-denatured proteins, in association with DnaK and GrpE. It is the nucleotide exchange factor for DnaK and may function as a thermosensor. Unfolded proteins bind initially to DnaJ; upon interaction with the DnaJ-bound protein, DnaK hydrolyzes its bound ATP, resulting in the formation of a stable complex. GrpE releases ADP from DnaK; ATP binding to DnaK triggers the release of the substrate protein, thus completing the reaction cycle. Several rounds of ATP-dependent interactions between DnaJ, DnaK and GrpE are required for fully efficient folding. The sequence is that of Protein GrpE from Halobacterium salinarum (strain ATCC 29341 / DSM 671 / R1).